The following is a 102-amino-acid chain: Small ribosomal subunit protein uS10 (102 aa).

It belongs to the universal ribosomal protein uS10 family. In terms of assembly, part of the 30S ribosomal subunit.

Functionally, involved in the binding of tRNA to the ribosomes. This Geobacillus kaustophilus (strain HTA426) protein is Small ribosomal subunit protein uS10.